A 131-amino-acid polypeptide reads, in one-letter code: Small ribosomal subunit protein eS24 (131 aa).

Residues 93–131 (RHGLYEKKKTSRKQRKERKNRMKKVRGTKKASVGAAGKK) form a disordered region. Over residues 101–121 (KTSRKQRKERKNRMKKVRGTK) the composition is skewed to basic residues.

This sequence belongs to the eukaryotic ribosomal protein eS24 family. In terms of assembly, component of the small ribosomal subunit. Part of the small subunit (SSU) processome, composed of more than 70 proteins and the RNA chaperone small nucleolar RNA (snoRNA) U3.

The protein localises to the cytoplasm. Its subcellular location is the nucleus. It localises to the nucleolus. In terms of biological role, component of the small ribosomal subunit. The ribosome is a large ribonucleoprotein complex responsible for the synthesis of proteins in the cell. Required for processing of pre-rRNA and maturation of 40S ribosomal subunits. Part of the small subunit (SSU) processome, first precursor of the small eukaryotic ribosomal subunit. During the assembly of the SSU processome in the nucleolus, many ribosome biogenesis factors, an RNA chaperone and ribosomal proteins associate with the nascent pre-rRNA and work in concert to generate RNA folding, modifications, rearrangements and cleavage as well as targeted degradation of pre-ribosomal RNA by the RNA exosome. The polypeptide is Small ribosomal subunit protein eS24 (rps24) (Ictalurus punctatus (Channel catfish)).